Reading from the N-terminus, the 338-residue chain is Anthocyanidin reductase ((2S)-flavan-3-ol-forming) (338 aa).

NADP(+)-binding positions include 18–21 (TGFV), K48, 87–90 (VATP), and Y168.

It belongs to the NAD(P)-dependent epimerase/dehydratase family. Dihydroflavonol-4-reductase subfamily.

The catalysed reaction is a (2S,3R)-flavan-3-ol + 2 NADP(+) = an anthocyanidin with a 3-hydroxy group + 2 NADPH + 2 H(+). It carries out the reaction a (2S,3S)-flavan-3-ol + 2 NADP(+) = an anthocyanidin with a 3-hydroxy group + 2 NADPH + 2 H(+). It functions in the pathway secondary metabolite biosynthesis; flavonoid biosynthesis. In terms of biological role, produces the terminal flavan-3-ol monomers required for the formation of proanthocyanidins or condensed tannins in leaves and flowers, as well as in the skin and seeds of developing berries. Behaves as a reductase and as a C-3 epimerase. Catalyzes the double reduction of anthocyanidins, producing a mixture of (2S,3S)- and (2S,3R)-flavan-3-ols. The enzyme catalyzes sequential hydride transfers to C-2 and C-4, respectively and epimerization at C-3 is achieved by tautomerization that occurs between the two hydride transfers. Converts cyanidin, pelargonidin and delphinidin into catechin and epicatechin, afzelechin and epiafzelechin, and gallocatechin and epigallocatechin respectively. This is Anthocyanidin reductase ((2S)-flavan-3-ol-forming) from Vitis vinifera (Grape).